We begin with the raw amino-acid sequence, 339 residues long: MFYKIAQKFMFQMDPELAHNFAIGSLKFTGNSPLNCFYAQNIKPAPVTMMGLTFPNPVGLAAGMDKEGECIDAFHAMGFGHIEVGTVTPRPQPGNEQPRCFRLKPAKAIINRMGFNNKGVDNLVANLKAVKSNAMVGVNIGKNKDTPVEQGKEDYLICMDKVYPYAAYIAVNISSPNTPGLRSLQYGDLLDDLLGSLKQKQKELAEQHGKYVPIALKIAPDLSSEEIEKIADALIRSEFDAAIATNTTLTRDGVSGLLNANEAGGLSGKPLNSLSTMVIKQLADCLKGQLPIIGVGGINSAEDALDKLDAGAEMVQIYSGFIYQGPKLIKDIVEAYRIK.

Residues 62-66 (AGMDK) and threonine 86 each bind FMN. Substrate is bound at residue lysine 66. 111-115 (NRMGF) lines the substrate pocket. FMN contacts are provided by asparagine 139 and asparagine 172. Asparagine 172 contributes to the substrate binding site. The Nucleophile role is filled by serine 175. Asparagine 177 is a substrate binding site. FMN-binding residues include lysine 217 and threonine 245. Position 246–247 (246–247 (NT)) interacts with substrate. Residues glycine 268, glycine 297, and 318-319 (YS) each bind FMN.

It belongs to the dihydroorotate dehydrogenase family. Type 2 subfamily. As to quaternary structure, monomer. FMN serves as cofactor.

It localises to the cell membrane. It catalyses the reaction (S)-dihydroorotate + a quinone = orotate + a quinol. It functions in the pathway pyrimidine metabolism; UMP biosynthesis via de novo pathway; orotate from (S)-dihydroorotate (quinone route): step 1/1. Its function is as follows. Catalyzes the conversion of dihydroorotate to orotate with quinone as electron acceptor. In Shewanella pealeana (strain ATCC 700345 / ANG-SQ1), this protein is Dihydroorotate dehydrogenase (quinone).